A 95-amino-acid polypeptide reads, in one-letter code: UPF0235 protein Pcar_0617 (95 aa).

The protein belongs to the UPF0235 family.

This is UPF0235 protein Pcar_0617 from Syntrophotalea carbinolica (strain DSM 2380 / NBRC 103641 / GraBd1) (Pelobacter carbinolicus).